The primary structure comprises 965 residues: UvrABC system protein A (965 aa).

Residue 32–39 participates in ATP binding; the sequence is GLSGSGKS. The C4-type zinc finger occupies 254–281; that stretch reads CPVCDYSLPELEPRLFSFNAPMGACPAC. 2 ABC transporter domains span residues 311-588 and 608-937; these read WDRR…PRSL and PNAT…HFLA. 641–648 serves as a coordination point for ATP; that stretch reads GVSGSGKS. The C4-type zinc-finger motif lies at 740–766; sequence CEACEGDGLIKVEMHFLPDVYVPCDIC.

Belongs to the ABC transporter superfamily. UvrA family. As to quaternary structure, forms a heterotetramer with UvrB during the search for lesions.

The protein resides in the cytoplasm. Functionally, the UvrABC repair system catalyzes the recognition and processing of DNA lesions. UvrA is an ATPase and a DNA-binding protein. A damage recognition complex composed of 2 UvrA and 2 UvrB subunits scans DNA for abnormalities. When the presence of a lesion has been verified by UvrB, the UvrA molecules dissociate. The chain is UvrABC system protein A from Xylella fastidiosa (strain Temecula1 / ATCC 700964).